The sequence spans 1101 residues: Isoleucine--tRNA ligase (1101 aa).

Positions 50–60 (PFANGLPHYGH) match the 'HIGH' region motif. The 'KMSKS' region signature appears at 629-633 (KLSKR). Position 632 (Lys632) interacts with ATP.

It belongs to the class-I aminoacyl-tRNA synthetase family. IleS type 2 subfamily. In terms of assembly, monomer. Zn(2+) is required as a cofactor.

It is found in the cytoplasm. The catalysed reaction is tRNA(Ile) + L-isoleucine + ATP = L-isoleucyl-tRNA(Ile) + AMP + diphosphate. Its function is as follows. Catalyzes the attachment of isoleucine to tRNA(Ile). As IleRS can inadvertently accommodate and process structurally similar amino acids such as valine, to avoid such errors it has two additional distinct tRNA(Ile)-dependent editing activities. One activity is designated as 'pretransfer' editing and involves the hydrolysis of activated Val-AMP. The other activity is designated 'posttransfer' editing and involves deacylation of mischarged Val-tRNA(Ile). In Anaplasma marginale (strain St. Maries), this protein is Isoleucine--tRNA ligase.